A 612-amino-acid chain; its full sequence is PAN2-PAN3 deadenylation complex subunit PAN3 (612 aa).

A C3H1-type zinc finger spans residues 10-39 (WAKDTPCKNITIYGYCKYENDGCIFNHGKP). Residues 44-62 (SNTGGAAAGSAEDSAASGG) are compositionally biased toward low complexity. The disordered stretch occupies residues 44–64 (SNTGGAAAGSAEDSAASGGVT). Short sequence motifs (PABPC-interacting motif-2 (PAM-2)) lie at residues 84–104 (SVAIPDFNNIPSFTPERIVSS) and 111–131 (TAFTPSFNPYGSDSFNPSANV). A pseudokinase domain region spans residues 231 to 481 (QVFPSDGNLP…TIAEFTALFS (251 aa)). ATP is bound by residues R286, 336–343 (DYYPQSNS), and 389–390 (DK). Residues 482-520 (HKMLDIISSSQTYSEYIEQHLSRELENGRLFRLMCKLNF) adopt a coiled-coil conformation. The interval 521–612 (IFGRMESSMD…IDSTFRSMTQ (92 aa)) is knob domain.

This sequence belongs to the protein kinase superfamily. PAN3 family. Homodimer. Forms a heterotrimer with a catalytic subunit PAN2 to form the poly(A)-nuclease (PAN) deadenylation complex. Interacts (via PAM-2 motif) with poly(A)-binding protein PAB1 (via PABC domain), conferring substrate specificity of the enzyme complex.

The protein localises to the cytoplasm. Its function is as follows. Regulatory subunit of the poly(A)-nuclease (PAN) deadenylation complex, one of two cytoplasmic mRNA deadenylases involved in mRNA turnover. PAN specifically shortens poly(A) tails of RNA and the activity is stimulated by poly(A)-binding protein PAB1. PAN deadenylation is followed by rapid degradation of the shortened mRNA tails by the CCR4-NOT complex. Deadenylated mRNAs are then degraded by two alternative mechanisms, namely exosome-mediated 3'-5' exonucleolytic degradation, or deadenylation-dependent mRNA decaping and subsequent 5'-3' exonucleolytic degradation by XRN1. May also be involved in post-transcriptional maturation of mRNA poly(A) tails. PAN3 acts as a positive regulator for PAN activity, recruiting the catalytic subunit PAN2 to mRNA via its interaction with RNA and with PAB1. The protein is PAN2-PAN3 deadenylation complex subunit PAN3 of Eremothecium gossypii (strain ATCC 10895 / CBS 109.51 / FGSC 9923 / NRRL Y-1056) (Yeast).